Reading from the N-terminus, the 262-residue chain is tRNA pseudouridine synthase A 2 (262 aa).

Aspartate 66 acts as the Nucleophile in catalysis. Tyrosine 125 is a binding site for substrate.

Belongs to the tRNA pseudouridine synthase TruA family. As to quaternary structure, homodimer.

The catalysed reaction is uridine(38/39/40) in tRNA = pseudouridine(38/39/40) in tRNA. Its function is as follows. Formation of pseudouridine at positions 38, 39 and 40 in the anticodon stem and loop of transfer RNAs. The polypeptide is tRNA pseudouridine synthase A 2 (Protochlamydia amoebophila (strain UWE25)).